The primary structure comprises 326 residues: Vascular endothelial growth factor D (326 aa).

Residues 1–21 (MYGEWAAVNILMMSYVYLVQG) form the signal peptide. Positions 22–93 (FSIEHRAVKD…SRSTSHRSTR (72 aa)) are excised as a propeptide. Cystine bridges form between cysteine 116/cysteine 158, cysteine 147/cysteine 194, and cysteine 151/cysteine 196. N-linked (GlcNAc...) asparagine glycans are attached at residues asparagine 160 and asparagine 190. A propeptide spanning residues 211 to 326 (SIQIPEEDQC…CRSMVFSLSP (116 aa)) is cleaved from the precursor. One copy of the 1; approximate repeat lies at 227–242 (CPVDMLWDNTKCKCVL). The tract at residues 227–317 (CPVDMLWDNT…KHKMFHPDTC (91 aa)) is 4 X 16 AA repeats of C-X(10)-C-X-C-X(1,3)-C. A run of 2 repeats spans residues 263-278 (CGPH…ECVC) and 282-298 (CPGD…CFEC). Asparagine 292 is a glycosylation site (N-linked (GlcNAc...) asparagine). The 4; truncated repeat unit spans residues 306–317 (CQKHKMFHPDTC).

This sequence belongs to the PDGF/VEGF growth factor family. As to quaternary structure, homodimer; non-covalent and antiparallel. Post-translationally, undergoes a complex proteolytic maturation which generates a variety of processed secreted forms with increased activity toward VEGFR-3 and VEGFR-2. VEGF-D first form an antiparallel homodimer linked by disulfide bonds before secretion. The fully processed VEGF-D is composed mostly of two VEGF homology domains (VHDs) bound by non-covalent interactions. Highly expressed in the spleen, kidney, lung, tongue, ovary and mammary gland.

Its subcellular location is the secreted. Its function is as follows. Growth factor active in angiogenesis, lymphangiogenesis and endothelial cell growth, stimulating their proliferation and migration and also has effects on the permeability of blood vessels. May function in the formation of the venous and lymphatic vascular systems during embryogenesis, and also in the maintenance of differentiated lymphatic endothelium in adults. Binds and activates VEGFR-3 (Flt4) receptor. The protein is Vascular endothelial growth factor D of Rattus norvegicus (Rat).